The following is a 602-amino-acid chain: UvrABC system protein C (602 aa).

Positions Asp-15 to Ile-92 constitute a GIY-YIG domain. Residues Gly-197–Thr-232 enclose the UVR domain.

This sequence belongs to the UvrC family. As to quaternary structure, interacts with UvrB in an incision complex.

Its subcellular location is the cytoplasm. Functionally, the UvrABC repair system catalyzes the recognition and processing of DNA lesions. UvrC both incises the 5' and 3' sides of the lesion. The N-terminal half is responsible for the 3' incision and the C-terminal half is responsible for the 5' incision. This Lacticaseibacillus casei (strain BL23) (Lactobacillus casei) protein is UvrABC system protein C.